The following is a 465-amino-acid chain: ATP-dependent protease ATPase subunit HslU (465 aa).

Residues Val18, 60 to 65 (GVGKTE), Asp277, Glu342, and Arg414 each bind ATP.

The protein belongs to the ClpX chaperone family. HslU subfamily. In terms of assembly, a double ring-shaped homohexamer of HslV is capped on each side by a ring-shaped HslU homohexamer. The assembly of the HslU/HslV complex is dependent on binding of ATP.

Its subcellular location is the cytoplasm. Its function is as follows. ATPase subunit of a proteasome-like degradation complex; this subunit has chaperone activity. The binding of ATP and its subsequent hydrolysis by HslU are essential for unfolding of protein substrates subsequently hydrolyzed by HslV. HslU recognizes the N-terminal part of its protein substrates and unfolds these before they are guided to HslV for hydrolysis. This is ATP-dependent protease ATPase subunit HslU from Caldicellulosiruptor saccharolyticus (strain ATCC 43494 / DSM 8903 / Tp8T 6331).